We begin with the raw amino-acid sequence, 143 residues long: MKLNTLAPAAGSKSAPKRLGRGIGSGLGKTSGKGHKGQKARSGGYHKVGFEGGQMPLQRRLPKFGFTSASKGYVAEIRLHELNNVVADEVTLDTLKDFGLIRKDIKTVKVIASGEIQKAVSLKGIACTKGAKEAIEKAGGKVE.

Residues 1 to 52 (MKLNTLAPAAGSKSAPKRLGRGIGSGLGKTSGKGHKGQKARSGGYHKVGFEG) are disordered. Positions 21–31 (RGIGSGLGKTS) are enriched in gly residues.

It belongs to the universal ribosomal protein uL15 family. Part of the 50S ribosomal subunit.

Functionally, binds to the 23S rRNA. In Francisella tularensis subsp. tularensis (strain FSC 198), this protein is Large ribosomal subunit protein uL15.